A 200-amino-acid chain; its full sequence is Adenylate kinase (200 aa).

11–16 is a binding site for ATP; that stretch reads GAGKGT. Residues 31 to 60 are NMP; the sequence is STGDIFRQNIKDRTELGQQVQALVDAGNYV. AMP is bound by residues Thr-32, Arg-37, 58–60, 86–89, and Gln-93; these read NYV and GYPR. The tract at residues 127–137 is LID; it reads RRAAEQGRADD. Arg-128 contacts ATP. The AMP site is built by Arg-134 and Arg-145. Gly-173 is a binding site for ATP.

Belongs to the adenylate kinase family. In terms of assembly, monomer.

It localises to the cytoplasm. It catalyses the reaction AMP + ATP = 2 ADP. Its pathway is purine metabolism; AMP biosynthesis via salvage pathway; AMP from ADP: step 1/1. Functionally, catalyzes the reversible transfer of the terminal phosphate group between ATP and AMP. Plays an important role in cellular energy homeostasis and in adenine nucleotide metabolism. This is Adenylate kinase from Clavibacter michiganensis subsp. michiganensis (strain NCPPB 382).